Here is a 732-residue protein sequence, read N- to C-terminus: E3 ubiquitin-protein ligase TRIM56 (732 aa).

The RING-type zinc finger occupies 21-60 (CKICLEQLRVPKTLPCLHTYCQDCLAQLAEGSRLRCPECR). The B box-type zinc finger occupies 164 to 205 (RQAAQCPQHPGEALRFLCQPCSQLLCRECRLDPHLDHPCLPL). Residues C169, H172, C192, and H197 each contribute to the Zn(2+) site. The stretch at 211-286 (ARRPGLEELL…LRAHVEAAEE (76 aa)) forms a coiled coil. Residues 374–384 (LPQKDSGKDGA) are compositionally biased toward basic and acidic residues. The tract at residues 374–462 (LPQKDSGKDG…PAPGPNLEGS (89 aa)) is disordered. Over residues 389 to 405 (GDATQPQSRDGVQTPNQ) the composition is skewed to polar residues. The residue at position 402 (T402) is a Phosphothreonine. The span at 407 to 416 (DGAKTPKESR) shows a compositional bias: basic and acidic residues. T419 is subject to Phosphothreonine. Positions 434-446 (SNKKRKFKGRLKS) are enriched in basic residues. At S452 the chain carries Phosphoserine.

The protein belongs to the TRIM/RBCC family. As to quaternary structure, interacts with STING1. Interacts with TICAM1.

The protein resides in the cytoplasm. The enzyme catalyses S-ubiquitinyl-[E2 ubiquitin-conjugating enzyme]-L-cysteine + [acceptor protein]-L-lysine = [E2 ubiquitin-conjugating enzyme]-L-cysteine + N(6)-ubiquitinyl-[acceptor protein]-L-lysine.. It functions in the pathway protein modification; protein ubiquitination. Its function is as follows. E3 ubiquitin-protein ligase that plays a key role in innate antiviral immunity by mediating ubiquitination of CGAS and STING1. In response to pathogen- and host-derived double-stranded DNA (dsDNA), targets STING1 to 'Lys-63'-linked ubiquitination, thereby promoting its homodimerization, a step required for the production of type I interferon IFN-beta. Also mediate monoubiquitination of CGAS, thereby promoting CGAS oligomerization and subsequent activation. Independently of its E3 ubiquitin ligase activity, positive regulator of TLR3 signaling. Potentiates extracellular double stranded RNA (dsRNA)-induced expression of IFNB1 and interferon-stimulated genes ISG15, IFIT1/ISG56, CXCL10, OASL and CCL5/RANTES. Restricts bovine viral diarrhea virus (BVDV) replication. The polypeptide is E3 ubiquitin-protein ligase TRIM56 (Bos taurus (Bovine)).